We begin with the raw amino-acid sequence, 88 residues long: Beta-insect excitatory toxin BmKIT1 (88 aa).

A signal peptide spans 1–18 (MKFFLIFLVIFPIMGVLG). The LCN-type CS-alpha/beta domain occupies 20–83 (KNGYAVDSSG…IKDATKSYCD (64 aa)). Cystine bridges form between Cys34–Cys55, Cys40–Cys60, Cys44–Cys62, and Cys56–Cys82. Ile87 is modified (isoleucine amide).

Belongs to the long (4 C-C) scorpion toxin superfamily. Sodium channel inhibitor family. Beta subfamily. Expressed by the venom gland.

Its subcellular location is the secreted. Its function is as follows. Excitatory insect beta-toxins induce a spastic paralysis. They bind voltage-independently at site-4 of sodium channels (Nav) and shift the voltage of activation toward more negative potentials thereby affecting sodium channel activation and promoting spontaneous and repetitive firing. This toxin is active only on insects. The polypeptide is Beta-insect excitatory toxin BmKIT1 (Olivierus martensii (Manchurian scorpion)).